A 626-amino-acid polypeptide reads, in one-letter code: FAD-binding monooxygenase moxY (626 aa).

The segment covering 1 to 23 (MAPFLSAHGESASSSSSSSPTPS) has biased composition (low complexity). A disordered region spans residues 1-47 (MAPFLSAHGESASSSSSSSPTPSRHTRNQHVDYSTPGSTGYNIPQNT). Residues 31–47 (VDYSTPGSTGYNIPQNT) show a composition bias toward polar residues. Residues 96-99 (TWLE), 108-109 (DI), and Tyr-114 contribute to the FAD site. 106 to 108 (GCD) lines the NADP(+) pocket. Residues 243-249 (SGASSIQ) and 266-267 (RT) each bind NADP(+).

Belongs to the FAD-binding monooxygenase family. FAD serves as cofactor.

Its pathway is mycotoxin biosynthesis. In terms of biological role, FAD-binding monooxygenase; part of the fragmented gene cluster that mediates the biosynthesis of dothistromin (DOTH), a polyketide toxin very similar in structure to the aflatoxin precursor, versicolorin B. The first step of the pathway is the conversion of acetate to norsolorinic acid (NOR) and requires the fatty acid synthase subunits hexA and hexB, as well as the polyketide synthase pksA. PksA combines a hexanoyl starter unit and 7 malonyl-CoA extender units to synthesize the precursor NOR. The hexanoyl starter unit is provided to the acyl-carrier protein (ACP) domain by the fungal fatty acid synthase hexA/hexB. The second step is the conversion of NOR to averantin (AVN) and requires the norsolorinic acid ketoreductase nor1, which catalyzes the dehydration of norsolorinic acid to form (1'S)-averantin. The cytochrome P450 monooxygenase avnA then catalyzes the hydroxylation of AVN to 5'hydroxyaverantin (HAVN). The next step is performed by adhA that transforms HAVN to averufin (AVF). Averufin might then be converted to hydroxyversicolorone by cypX and avfA. Hydroxyversicolorone is further converted versiconal hemiacetal acetate (VHA) by moxY. VHA is then the substrate for the versiconal hemiacetal acetate esterase est1 to yield versiconal (VAL). Versicolorin B synthase vbsA then converts VAL to versicolorin B (VERB) by closing the bisfuran ring. Then, the activity of the versicolorin B desaturase verB leads to versicolorin A (VERA). DotB, a predicted chloroperoxidase, may perform epoxidation of the A-ring of VERA. Alternatively, a cytochrome P450, such as cypX or avnA could catalyze this step. It is also possible that another, uncharacterized, cytochrome P450 enzyme is responsible for this step. Opening of the epoxide could potentially be achieved by the epoxide hydrolase epoA. However, epoA seems not to be required for DOTH biosynthesis, but other epoxide hydrolases may have the ability to complement this hydrolysis. Alternatively, opening of the epoxide ring could be achieved non-enzymatically. The next step is the deoxygenation of ring A to yield the 5,8-dihydroxyanthraquinone which is most likely catalyzed by the NADPH dehydrogenase encoded by ver1. The last stages of DOTH biosynthesis are proposed to involve hydroxylation of the bisfuran. OrdB and norB might have oxidative roles here. An alternative possibility is that cytochrome P450 monoogenases such as avnA and cypX might perform these steps in addition to previously proposed steps. The protein is FAD-binding monooxygenase moxY of Dothistroma septosporum (Red band needle blight fungus).